The primary structure comprises 88 residues: UPF0250 protein Shal_3239 (88 aa).

This sequence belongs to the UPF0250 family.

This Shewanella halifaxensis (strain HAW-EB4) protein is UPF0250 protein Shal_3239.